A 541-amino-acid polypeptide reads, in one-letter code: EH domain-containing protein 4 (541 aa).

Methionine 1 is modified (N-acetylmethionine). A Dynamin-type G domain is found at 58–289 (FENKPMILLV…DLFRDIQSLP (232 aa)). Residues 68 to 75 (GQYSTGKT) form a G1 motif region. ATP is bound at residue 68–75 (GQYSTGKT). Positions 94–95 (EP) are G2 motif. The G3 motif stretch occupies residues 156–159 (DSPG). Phosphoserine is present on serine 162. Residues 222–225 (NKAD) are G4 motif. Residue lysine 223 coordinates ATP. A region of interest (G5 motif) is located at residue valine 246. Tryptophan 261 contributes to the ATP binding site. The EH domain occupies 447 to 535 (DKPVYDELFY…PHLVPPSHRK (89 aa)). Tyrosine 451 is subject to Phosphotyrosine. A Phosphoserine modification is found at serine 459. An EF-hand domain is found at 479 to 514 (LPNSVLGKIWKLADCDCDGMLDEEEFALAKHLIKIK). Ca(2+) is bound by residues aspartate 492, aspartate 494, aspartate 496, methionine 498, and glutamate 503.

Belongs to the TRAFAC class dynamin-like GTPase superfamily. Dynamin/Fzo/YdjA family. EHD subfamily. As to quaternary structure, homooligomer, and heterooligomer with EHD1, EHD2 and EHD3. Forms a complex with EHD4 and MICALL1; the complex controls CDH5 trafficking and coordinates angiogenesis. As to expression, highly expressed in pancreas and heart.

The protein resides in the early endosome membrane. It is found in the recycling endosome membrane. Its subcellular location is the cell membrane. It localises to the cell junction. The protein localises to the adherens junction. ATP- and membrane-binding protein that probably controls membrane reorganization/tubulation upon ATP hydrolysis. Plays a role in early endosomal transport. During sprouting angiogenesis, in complex with PACSIN2 and MICALL1, forms recycling endosome-like tubular structure at asymmetric adherens junctions to control CDH5 trafficking. In Homo sapiens (Human), this protein is EH domain-containing protein 4.